Consider the following 207-residue polypeptide: MSVGADKIISNIKADAQAKADEIISKAKAESEKIIADGEAKAQIEKEQILDSANKQADMKYQQIISEAKVNSRRKELEAREELIEKAFRIASEKIEKLASENSANYVESLKVMIKDASIQVGSTQLEILVREDDVENVKSMIDEVSEYVTKETGNETSFVIGEPIDIIGGAVVKTVDGDVEVKNTIEARMLRYRKHLRSEVAKKLFR.

This sequence belongs to the V-ATPase E subunit family. As to quaternary structure, has multiple subunits with at least A(3), B(3), C, D, E, F, H, I and proteolipid K(x).

Its subcellular location is the cell membrane. Component of the A-type ATP synthase that produces ATP from ADP in the presence of a proton gradient across the membrane. The chain is A-type ATP synthase subunit E from Methanosphaera stadtmanae (strain ATCC 43021 / DSM 3091 / JCM 11832 / MCB-3).